The primary structure comprises 345 residues: uncharacterized protein (345 aa).

Belongs to the proline racemase family.

This is an uncharacterized protein from Bacillus anthracis.